The chain runs to 154 residues: Immunity protein YwqK (154 aa).

Probably interacts with cognate toxin YwqJ but not with other non-cognate LXG toxins. The interaction inhibits the toxic activity of YwqJ.

It localises to the cytoplasm. Its function is as follows. Immunity component of one of 6 LXG toxin-immunity modules in this strain. They promote kin selection, mediate competition in biofilms, and drive spatial segregation of different strains, indicating that LXG toxins may help avoid warfare between strains in biofilms. Mediates intercellular competition during biofilm formation; disruption of the operon disadvantages the bacteria, but overexpression of the cognate immunity protein restores growth in competition with wild-type. In situ neutralizes the toxic effect of cognate toxin YqcG. Probably neutralizes the ability to inhibit growth of cognate toxin YwqJ. Probably does not have immunity protein activity on other LXG toxins. The protein is Immunity protein YwqK (ywqK) of Bacillus subtilis (strain 168).